The chain runs to 355 residues: Protein RecA (355 aa).

Residue 67–74 participates in ATP binding; the sequence is GPESSGKT.

It belongs to the RecA family.

The protein resides in the cytoplasm. In terms of biological role, can catalyze the hydrolysis of ATP in the presence of single-stranded DNA, the ATP-dependent uptake of single-stranded DNA by duplex DNA, and the ATP-dependent hybridization of homologous single-stranded DNAs. It interacts with LexA causing its activation and leading to its autocatalytic cleavage. The chain is Protein RecA from Shewanella baltica (strain OS195).